The sequence spans 492 residues: Probable beta-1,4-xylosyltransferase IRX14H (492 aa).

At 1-33 (MKLSVFRLSYWNRRGSSFRSSPSLDPSFDGKSP) the chain is on the cytoplasmic side. Residues 34–54 (SSVFWFVIHGLCCLISLILGF) form a helical; Signal-anchor for type II membrane protein membrane-spanning segment. At 55–492 (RFSHLVLFFL…FDGVKVSATS (438 aa)) the chain is on the lumenal side. Asparagine 99, asparagine 196, and asparagine 314 each carry an N-linked (GlcNAc...) asparagine glycan. The disordered stretch occupies residues 457-492 (IKEAKSNSKPRVSKSKSYKEKQEPKAFDGVKVSATS). The span at 473–484 (SYKEKQEPKAFD) shows a compositional bias: basic and acidic residues.

The protein belongs to the glycosyltransferase 43 family. As to expression, expressed in developing interfascicular fibers and xylem cells in stems and developing secondary xylem in roots.

The protein resides in the golgi apparatus membrane. In terms of biological role, involved in the synthesis of the hemicellulose glucuronoxylan, a major component of secondary cell walls. Probably involved in the elongation of glucuronoxylan xylosyl backbone. The chain is Probable beta-1,4-xylosyltransferase IRX14H (IRX14H) from Arabidopsis thaliana (Mouse-ear cress).